The following is a 54-amino-acid chain: UPF0391 membrane protein Sde_0270 (54 aa).

Transmembrane regions (helical) follow at residues 6–26 (IVFL…IAGV) and 29–49 (GIAK…LVIG).

The protein belongs to the UPF0391 family.

It localises to the cell membrane. This Saccharophagus degradans (strain 2-40 / ATCC 43961 / DSM 17024) protein is UPF0391 membrane protein Sde_0270.